The following is a 274-amino-acid chain: Formamidopyrimidine-DNA glycosylase (274 aa).

Catalysis depends on proline 2, which acts as the Schiff-base intermediate with DNA. Glutamate 3 (proton donor) is an active-site residue. The Proton donor; for beta-elimination activity role is filled by lysine 60. Residues histidine 93 and arginine 112 each coordinate DNA. Residues 240 to 274 (FVYGRKGEPCKRCGTPIEKTVVAGRGTHYCPRCQR) form an FPG-type zinc finger. Arginine 264 (proton donor; for delta-elimination activity) is an active-site residue.

Belongs to the FPG family. As to quaternary structure, monomer. Zn(2+) serves as cofactor.

The enzyme catalyses Hydrolysis of DNA containing ring-opened 7-methylguanine residues, releasing 2,6-diamino-4-hydroxy-5-(N-methyl)formamidopyrimidine.. It catalyses the reaction 2'-deoxyribonucleotide-(2'-deoxyribose 5'-phosphate)-2'-deoxyribonucleotide-DNA = a 3'-end 2'-deoxyribonucleotide-(2,3-dehydro-2,3-deoxyribose 5'-phosphate)-DNA + a 5'-end 5'-phospho-2'-deoxyribonucleoside-DNA + H(+). Functionally, involved in base excision repair of DNA damaged by oxidation or by mutagenic agents. Acts as a DNA glycosylase that recognizes and removes damaged bases. Has a preference for oxidized purines, such as 7,8-dihydro-8-oxoguanine (8-oxoG). Has AP (apurinic/apyrimidinic) lyase activity and introduces nicks in the DNA strand. Cleaves the DNA backbone by beta-delta elimination to generate a single-strand break at the site of the removed base with both 3'- and 5'-phosphates. The polypeptide is Formamidopyrimidine-DNA glycosylase (Geobacillus kaustophilus (strain HTA426)).